The following is a 205-amino-acid chain: MNDNREQLTQQIIDAGRFLYGRGWSPATSSNYSARLDEQRALLTVSGKHKGQLGFDDVLATDLAGNSLEPGKKPSAETLLHTQLYAWNPAIGAVLHTHSVNATVLSRLVRGDRLVLQDYELQKAFAGVTTHEGQVEVPIFDNDQDIARLASRVQPWLEAHPHCPGYLIRGHGLYTWGARMSDALRQVEAFEFLFECELKVLSLSR.

Zn(2+) is bound by residues His96 and His98.

Belongs to the aldolase class II family. MtnB subfamily. Zn(2+) serves as cofactor.

It catalyses the reaction 5-(methylsulfanyl)-D-ribulose 1-phosphate = 5-methylsulfanyl-2,3-dioxopentyl phosphate + H2O. The protein operates within amino-acid biosynthesis; L-methionine biosynthesis via salvage pathway; L-methionine from S-methyl-5-thio-alpha-D-ribose 1-phosphate: step 2/6. Functionally, catalyzes the dehydration of methylthioribulose-1-phosphate (MTRu-1-P) into 2,3-diketo-5-methylthiopentyl-1-phosphate (DK-MTP-1-P). In Pseudomonas aeruginosa (strain ATCC 15692 / DSM 22644 / CIP 104116 / JCM 14847 / LMG 12228 / 1C / PRS 101 / PAO1), this protein is Methylthioribulose-1-phosphate dehydratase.